The chain runs to 313 residues: Probable cell division protein WhiA (313 aa).

Positions 274-308 (SLKELGELVPGGPISKSGVNHRLRKLNAYADELRA) form a DNA-binding region, H-T-H motif.

This sequence belongs to the WhiA family.

Its function is as follows. Involved in cell division and chromosome segregation. This is Probable cell division protein WhiA from Limosilactobacillus reuteri subsp. reuteri (strain JCM 1112) (Lactobacillus reuteri).